A 609-amino-acid chain; its full sequence is UvrABC system protein C (609 aa).

Residues 16-94 form the GIY-YIG domain; sequence SSAGVYRMYD…IKQYMPKYNV (79 aa). One can recognise a UVR domain in the interval 203–238; it reads QQVISALVDKMELAAERQAYEQAARFRDQIMALRKV.

It belongs to the UvrC family. In terms of assembly, interacts with UvrB in an incision complex.

Its subcellular location is the cytoplasm. In terms of biological role, the UvrABC repair system catalyzes the recognition and processing of DNA lesions. UvrC both incises the 5' and 3' sides of the lesion. The N-terminal half is responsible for the 3' incision and the C-terminal half is responsible for the 5' incision. The protein is UvrABC system protein C of Shewanella baltica (strain OS195).